Here is a 105-residue protein sequence, read N- to C-terminus: Chloroacetanilide N-alkylformylase 2, ferredoxin component (105 aa).

Positions 2-105 (PKLVVVTREG…GLTVTIAPED (104 aa)) constitute a 2Fe-2S ferredoxin-type domain. 4 residues coordinate [2Fe-2S] cluster: Cys-40, Cys-46, Cys-49, and Cys-86.

It belongs to the adrenodoxin/putidaredoxin family. In terms of assembly, the chloroacetanilide N-alkylformylase multicomponent enzyme system is composed of an oxygenase component (CndA) and an electron transfer component formed by a ferredoxin reductase (CndC1) and a ferredoxin (CndB1). In vitro, chloroacetanilide N-alkylformylase assays in which CndB1 is substituted for CndB2 demonstrate that the two enzymes possess nearly identical activities. The cofactor is [2Fe-2S] cluster.

In terms of biological role, component of the chloroacetanilide N-alkylformylase multicomponent enzyme system involved in the degradation of chloroacetanilide herbicides (N-alkoxyalkyl-N-chloroacetyl-substituted aniline derivatives). In vitro, functions as an intermediate electron transfer protein. This Rhizorhabdus wittichii (strain DC-6 / KACC 16600) (Sphingomonas wittichii) protein is Chloroacetanilide N-alkylformylase 2, ferredoxin component.